The chain runs to 213 residues: 3-demethoxyubiquinol 3-hydroxylase (213 aa).

Fe cation contacts are provided by glutamate 62, glutamate 92, histidine 95, glutamate 144, glutamate 176, and histidine 179.

The protein belongs to the COQ7 family. Fe cation serves as cofactor.

It is found in the cell membrane. It carries out the reaction a 5-methoxy-2-methyl-3-(all-trans-polyprenyl)benzene-1,4-diol + AH2 + O2 = a 3-demethylubiquinol + A + H2O. The protein operates within cofactor biosynthesis; ubiquinone biosynthesis. Its function is as follows. Catalyzes the hydroxylation of 2-nonaprenyl-3-methyl-6-methoxy-1,4-benzoquinol during ubiquinone biosynthesis. This chain is 3-demethoxyubiquinol 3-hydroxylase, found in Legionella pneumophila (strain Corby).